We begin with the raw amino-acid sequence, 391 residues long: tRNA(Met) cytidine acetate ligase (391 aa).

Residues 7–20 (IAEY…HIYQ), glycine 101, asparagine 153, and arginine 178 contribute to the ATP site.

This sequence belongs to the TmcAL family.

It is found in the cytoplasm. It carries out the reaction cytidine(34) in elongator tRNA(Met) + acetate + ATP = N(4)-acetylcytidine(34) in elongator tRNA(Met) + AMP + diphosphate. Catalyzes the formation of N(4)-acetylcytidine (ac(4)C) at the wobble position of elongator tRNA(Met), using acetate and ATP as substrates. First activates an acetate ion to form acetyladenylate (Ac-AMP) and then transfers the acetyl group to tRNA to form ac(4)C34. This Latilactobacillus sakei subsp. sakei (strain 23K) (Lactobacillus sakei subsp. sakei) protein is tRNA(Met) cytidine acetate ligase.